Reading from the N-terminus, the 315-residue chain is 4-hydroxy-3-methylbut-2-enyl diphosphate reductase (315 aa).

Position 12 (Cys12) interacts with [4Fe-4S] cluster. (2E)-4-hydroxy-3-methylbut-2-enyl diphosphate contacts are provided by His41 and His74. Dimethylallyl diphosphate contacts are provided by His41 and His74. His41 and His74 together coordinate isopentenyl diphosphate. Cys96 contributes to the [4Fe-4S] cluster binding site. His124 is a binding site for (2E)-4-hydroxy-3-methylbut-2-enyl diphosphate. Position 124 (His124) interacts with dimethylallyl diphosphate. His124 serves as a coordination point for isopentenyl diphosphate. The active-site Proton donor is the Glu126. (2E)-4-hydroxy-3-methylbut-2-enyl diphosphate is bound at residue Thr168. Residue Cys198 participates in [4Fe-4S] cluster binding. Positions 226, 227, 228, and 270 each coordinate (2E)-4-hydroxy-3-methylbut-2-enyl diphosphate. Ser226, Ser227, Asn228, and Ser270 together coordinate dimethylallyl diphosphate. Residues Ser226, Ser227, Asn228, and Ser270 each coordinate isopentenyl diphosphate.

The protein belongs to the IspH family. [4Fe-4S] cluster is required as a cofactor.

The catalysed reaction is isopentenyl diphosphate + 2 oxidized [2Fe-2S]-[ferredoxin] + H2O = (2E)-4-hydroxy-3-methylbut-2-enyl diphosphate + 2 reduced [2Fe-2S]-[ferredoxin] + 2 H(+). It catalyses the reaction dimethylallyl diphosphate + 2 oxidized [2Fe-2S]-[ferredoxin] + H2O = (2E)-4-hydroxy-3-methylbut-2-enyl diphosphate + 2 reduced [2Fe-2S]-[ferredoxin] + 2 H(+). Its pathway is isoprenoid biosynthesis; dimethylallyl diphosphate biosynthesis; dimethylallyl diphosphate from (2E)-4-hydroxy-3-methylbutenyl diphosphate: step 1/1. It functions in the pathway isoprenoid biosynthesis; isopentenyl diphosphate biosynthesis via DXP pathway; isopentenyl diphosphate from 1-deoxy-D-xylulose 5-phosphate: step 6/6. In terms of biological role, catalyzes the conversion of 1-hydroxy-2-methyl-2-(E)-butenyl 4-diphosphate (HMBPP) into a mixture of isopentenyl diphosphate (IPP) and dimethylallyl diphosphate (DMAPP). Acts in the terminal step of the DOXP/MEP pathway for isoprenoid precursor biosynthesis. In Pseudomonas fluorescens (strain SBW25), this protein is 4-hydroxy-3-methylbut-2-enyl diphosphate reductase.